Reading from the N-terminus, the 207-residue chain is ATP synthase subunit b 2 (207 aa).

The helical transmembrane segment at 53-72 threads the bilayer; that stretch reads TYASQLLWLVITFGVFYLLM.

It belongs to the ATPase B chain family. F-type ATPases have 2 components, F(1) - the catalytic core - and F(0) - the membrane proton channel. F(1) has five subunits: alpha(3), beta(3), gamma(1), delta(1), epsilon(1). F(0) has three main subunits: a(1), b(2) and c(10-14). The alpha and beta chains form an alternating ring which encloses part of the gamma chain. F(1) is attached to F(0) by a central stalk formed by the gamma and epsilon chains, while a peripheral stalk is formed by the delta and b chains.

The protein localises to the cell inner membrane. Its function is as follows. F(1)F(0) ATP synthase produces ATP from ADP in the presence of a proton or sodium gradient. F-type ATPases consist of two structural domains, F(1) containing the extramembraneous catalytic core and F(0) containing the membrane proton channel, linked together by a central stalk and a peripheral stalk. During catalysis, ATP synthesis in the catalytic domain of F(1) is coupled via a rotary mechanism of the central stalk subunits to proton translocation. Functionally, component of the F(0) channel, it forms part of the peripheral stalk, linking F(1) to F(0). The b'-subunit is a diverged and duplicated form of b found in plants and photosynthetic bacteria. The protein is ATP synthase subunit b 2 (atpF2) of Rhizobium etli (strain ATCC 51251 / DSM 11541 / JCM 21823 / NBRC 15573 / CFN 42).